The primary structure comprises 404 residues: uncharacterized protein (404 aa).

The signal sequence occupies residues 1–21 (MRKLGLALSIMGLLLVSIVAG). Position 22 is an N-acetylcysteine (C22). C22 carries S-archaeol cysteine lipidation.

The protein belongs to the BMP lipoprotein family.

Its subcellular location is the cell membrane. This is an uncharacterized protein from Pyrococcus abyssi (strain GE5 / Orsay).